A 177-amino-acid chain; its full sequence is Peptide methionine sulfoxide reductase MsrA 2 (177 aa).

Residue C12 is part of the active site.

Belongs to the MsrA Met sulfoxide reductase family.

The enzyme catalyses L-methionyl-[protein] + [thioredoxin]-disulfide + H2O = L-methionyl-(S)-S-oxide-[protein] + [thioredoxin]-dithiol. It catalyses the reaction [thioredoxin]-disulfide + L-methionine + H2O = L-methionine (S)-S-oxide + [thioredoxin]-dithiol. In terms of biological role, has an important function as a repair enzyme for proteins that have been inactivated by oxidation. Catalyzes the reversible oxidation-reduction of methionine sulfoxide in proteins to methionine. The protein is Peptide methionine sulfoxide reductase MsrA 2 of Staphylococcus aureus (strain MRSA252).